The sequence spans 199 residues: Photosystem I reaction center subunit XI (199 aa).

A run of 2 helical transmembrane segments spans residues 108–128 and 165–185; these read ITAGLLAAIGAVHIMTALLVL and FWLGGCGGAVFAWLLVGTLHL.

The protein belongs to the PsaL family.

Its subcellular location is the cellular thylakoid membrane. The protein is Photosystem I reaction center subunit XI of Prochlorococcus marinus (strain MIT 9515).